Reading from the N-terminus, the 191-residue chain is MTVVLRLPRELRPELRRPWGTLYPRPSIKTYRRLHEESEVLITVGDMTTRSFLRCSIRPDVAVVDRKMLRTVPVDPGNKFPVTLDVNNPPGTITREAWDTVRRGIDYALDGDATLIDVTGEEDLLAIPAILIAPENSIVCYGLPGEGMVAARVTQHLKDSVLRLLTRFRGYDEWKSRSWISGITPCCTAKR.

Positions 46, 65, 67, and 122 each coordinate GTP.

The protein belongs to the GTP-dependent DPCK family.

The catalysed reaction is 3'-dephospho-CoA + GTP = GDP + CoA + H(+). Its pathway is cofactor biosynthesis; coenzyme A biosynthesis. Its function is as follows. Catalyzes the GTP-dependent phosphorylation of the 3'-hydroxyl group of dephosphocoenzyme A to form coenzyme A (CoA). The polypeptide is GTP-dependent dephospho-CoA kinase (Methanopyrus kandleri (strain AV19 / DSM 6324 / JCM 9639 / NBRC 100938)).